The primary structure comprises 1070 residues: DNA-directed RNA polymerase subunit beta (1070 aa).

Belongs to the RNA polymerase beta chain family. In plastids the minimal PEP RNA polymerase catalytic core is composed of four subunits: alpha, beta, beta', and beta''. When a (nuclear-encoded) sigma factor is associated with the core the holoenzyme is formed, which can initiate transcription.

It is found in the plastid. The protein localises to the chloroplast. The catalysed reaction is RNA(n) + a ribonucleoside 5'-triphosphate = RNA(n+1) + diphosphate. Functionally, DNA-dependent RNA polymerase catalyzes the transcription of DNA into RNA using the four ribonucleoside triphosphates as substrates. The polypeptide is DNA-directed RNA polymerase subunit beta (Piper cenocladum (Ant piper)).